The primary structure comprises 323 residues: tRNA U34 carboxymethyltransferase (323 aa).

Carboxy-S-adenosyl-L-methionine is bound by residues Lys-91, Trp-105, Lys-110, Gly-130, Asp-152–Ser-154, Ile-181–Glu-182, Met-196, Tyr-200, and Arg-315.

Belongs to the class I-like SAM-binding methyltransferase superfamily. CmoB family. As to quaternary structure, homotetramer.

It catalyses the reaction carboxy-S-adenosyl-L-methionine + 5-hydroxyuridine(34) in tRNA = 5-carboxymethoxyuridine(34) in tRNA + S-adenosyl-L-homocysteine + H(+). Functionally, catalyzes carboxymethyl transfer from carboxy-S-adenosyl-L-methionine (Cx-SAM) to 5-hydroxyuridine (ho5U) to form 5-carboxymethoxyuridine (cmo5U) at position 34 in tRNAs. This is tRNA U34 carboxymethyltransferase from Vibrio parahaemolyticus serotype O3:K6 (strain RIMD 2210633).